The primary structure comprises 436 residues: Enolase (436 aa).

Glutamine 167 lines the (2R)-2-phosphoglycerate pocket. Residue glutamate 209 is the Proton donor of the active site. Mg(2+) contacts are provided by aspartate 246, glutamate 291, and aspartate 318. 4 residues coordinate (2R)-2-phosphoglycerate: lysine 343, arginine 372, serine 373, and lysine 394. Lysine 343 serves as the catalytic Proton acceptor.

This sequence belongs to the enolase family. As to quaternary structure, component of the RNA degradosome, a multiprotein complex involved in RNA processing and mRNA degradation. The cofactor is Mg(2+).

It localises to the cytoplasm. It is found in the secreted. The protein localises to the cell surface. The catalysed reaction is (2R)-2-phosphoglycerate = phosphoenolpyruvate + H2O. It functions in the pathway carbohydrate degradation; glycolysis; pyruvate from D-glyceraldehyde 3-phosphate: step 4/5. Catalyzes the reversible conversion of 2-phosphoglycerate (2-PG) into phosphoenolpyruvate (PEP). It is essential for the degradation of carbohydrates via glycolysis. The polypeptide is Enolase (Haemophilus influenzae (strain 86-028NP)).